Consider the following 419-residue polypeptide: UDP-N-acetylglucosamine 1-carboxyvinyltransferase (419 aa).

Residue 23 to 24 participates in phosphoenolpyruvate binding; the sequence is KN. Arg-92 is a binding site for UDP-N-acetyl-alpha-D-glucosamine. Catalysis depends on Cys-116, which acts as the Proton donor. Cys-116 carries the 2-(S-cysteinyl)pyruvic acid O-phosphothioketal modification. UDP-N-acetyl-alpha-D-glucosamine-binding positions include 121 to 125, 161 to 164, Asp-306, and Ile-328; these read RPVDL and KVSV.

It belongs to the EPSP synthase family. MurA subfamily.

The protein localises to the cytoplasm. It carries out the reaction phosphoenolpyruvate + UDP-N-acetyl-alpha-D-glucosamine = UDP-N-acetyl-3-O-(1-carboxyvinyl)-alpha-D-glucosamine + phosphate. Its pathway is cell wall biogenesis; peptidoglycan biosynthesis. Functionally, cell wall formation. Adds enolpyruvyl to UDP-N-acetylglucosamine. This chain is UDP-N-acetylglucosamine 1-carboxyvinyltransferase, found in Vibrio cholerae serotype O1 (strain ATCC 39541 / Classical Ogawa 395 / O395).